The following is a 243-amino-acid chain: Geranylgeranylglyceryl phosphate synthase (243 aa).

Residues Asp-29 and Ser-58 each contribute to the Mg(2+) site. Sn-glycerol 1-phosphate is bound by residues 178–184 (YLEAGSG), 209–210 (GG), and 231–232 (GT).

Belongs to the GGGP/HepGP synthase family. Group II subfamily. As to quaternary structure, homodimer. Mg(2+) serves as cofactor.

It carries out the reaction sn-glycerol 1-phosphate + (2E,6E,10E)-geranylgeranyl diphosphate = sn-3-O-(geranylgeranyl)glycerol 1-phosphate + diphosphate. Functionally, prenyltransferase that catalyzes the transfer of the geranylgeranyl moiety of geranylgeranyl diphosphate (GGPP) to the C3 hydroxyl of sn-glycerol-1-phosphate (G1P). In Flavobacterium johnsoniae (strain ATCC 17061 / DSM 2064 / JCM 8514 / BCRC 14874 / CCUG 350202 / NBRC 14942 / NCIMB 11054 / UW101) (Cytophaga johnsonae), this protein is Geranylgeranylglyceryl phosphate synthase.